The sequence spans 244 residues: Phosphoadenosine 5'-phosphosulfate reductase (244 aa).

Cysteine 239 (nucleophile; cysteine thiosulfonate intermediate) is an active-site residue.

This sequence belongs to the PAPS reductase family. CysH subfamily.

Its subcellular location is the cytoplasm. The catalysed reaction is [thioredoxin]-disulfide + sulfite + adenosine 3',5'-bisphosphate + 2 H(+) = [thioredoxin]-dithiol + 3'-phosphoadenylyl sulfate. It participates in sulfur metabolism; hydrogen sulfide biosynthesis; sulfite from sulfate: step 3/3. Catalyzes the formation of sulfite from phosphoadenosine 5'-phosphosulfate (PAPS) using thioredoxin as an electron donor. This is Phosphoadenosine 5'-phosphosulfate reductase from Shigella flexneri serotype 5b (strain 8401).